A 1049-amino-acid chain; its full sequence is Multiple C2 domain and transmembrane region protein 16 (1049 aa).

The C2 1 domain maps to 1-112 (MATTRKLVVE…VGQGEEALIY (112 aa)). The disordered stretch occupies residues 136–249 (DEKPPPLKPT…PPQNQPDGED (114 aa)). Composition is skewed to basic and acidic residues over residues 153–170 (VEEK…ESKP) and 226–238 (ESDK…KPVE). 3 C2 domains span residues 302 to 426 (TSEI…PQWY), 460 to 582 (TAGN…SRWL), and 617 to 745 (VCSD…RNTY). Residues Ser338, Asp390, Thr393, and Ser398 each coordinate Ca(2+). 2 consecutive transmembrane segments (helical) span residues 883 to 903 (VMLI…LFVI) and 989 to 1009 (ATGI…LVPT).

This sequence belongs to the MCTP family. Ca(2+) serves as cofactor. As to expression, expressed in the vascular tissues of roots, cotyledons and rosette leaves. Accumulates in roots meristems and shoot apical meristems (SAMs). Observed in flowers.

The protein resides in the endoplasmic reticulum membrane. Its function is as follows. May function as a signaling molecule by regulating the trafficking of other regulators. This Arabidopsis thaliana (Mouse-ear cress) protein is Multiple C2 domain and transmembrane region protein 16.